The primary structure comprises 154 residues: Xanthine-guanine phosphoribosyltransferase (154 aa).

5-phospho-alpha-D-ribose 1-diphosphate-binding positions include 37 to 38, R69, and 88 to 96; these read RG and EDLVDSGDT. R69 provides a ligand contact to GMP. D89 provides a ligand contact to Mg(2+). Guanine-binding residues include D92 and I135. Xanthine-binding residues include D92 and I135. GMP contacts are provided by residues 92 to 96 and 134 to 135; these read DSGDT and WI.

This sequence belongs to the purine/pyrimidine phosphoribosyltransferase family. XGPT subfamily. In terms of assembly, homotetramer. It depends on Mg(2+) as a cofactor.

The protein localises to the cell inner membrane. It catalyses the reaction GMP + diphosphate = guanine + 5-phospho-alpha-D-ribose 1-diphosphate. It carries out the reaction XMP + diphosphate = xanthine + 5-phospho-alpha-D-ribose 1-diphosphate. The catalysed reaction is IMP + diphosphate = hypoxanthine + 5-phospho-alpha-D-ribose 1-diphosphate. Its pathway is purine metabolism; GMP biosynthesis via salvage pathway; GMP from guanine: step 1/1. It functions in the pathway purine metabolism; XMP biosynthesis via salvage pathway; XMP from xanthine: step 1/1. Purine salvage pathway enzyme that catalyzes the transfer of the ribosyl-5-phosphate group from 5-phospho-alpha-D-ribose 1-diphosphate (PRPP) to the N9 position of the 6-oxopurines guanine and xanthine to form the corresponding ribonucleotides GMP (guanosine 5'-monophosphate) and XMP (xanthosine 5'-monophosphate), with the release of PPi. To a lesser extent, also acts on hypoxanthine. The protein is Xanthine-guanine phosphoribosyltransferase of Vibrio parahaemolyticus serotype O3:K6 (strain RIMD 2210633).